The chain runs to 149 residues: L-alanine exporter AlaE (149 aa).

4 consecutive transmembrane segments (helical) span residues 16–36 (FAMVVYCSVVNMLIEIFLSGM), 46–66 (LVAIPVNILIAWPYGVYRDLI), 83–105 (ADVLAYVTFQSPVYIIILLTVGA), and 115–135 (SSNIVVSMLMGAVYGYFLDYC).

The protein belongs to the AlaE exporter family.

It localises to the cell inner membrane. In terms of biological role, exports L-alanine. The chain is L-alanine exporter AlaE from Salmonella typhimurium (strain LT2 / SGSC1412 / ATCC 700720).